Consider the following 145-residue polypeptide: D-aminoacyl-tRNA deacylase (145 aa).

The Gly-cisPro motif, important for rejection of L-amino acids motif lies at 137-138 (GP).

It belongs to the DTD family. In terms of assembly, homodimer.

The protein localises to the cytoplasm. It carries out the reaction glycyl-tRNA(Ala) + H2O = tRNA(Ala) + glycine + H(+). It catalyses the reaction a D-aminoacyl-tRNA + H2O = a tRNA + a D-alpha-amino acid + H(+). Functionally, an aminoacyl-tRNA editing enzyme that deacylates mischarged D-aminoacyl-tRNAs. Also deacylates mischarged glycyl-tRNA(Ala), protecting cells against glycine mischarging by AlaRS. Acts via tRNA-based rather than protein-based catalysis; rejects L-amino acids rather than detecting D-amino acids in the active site. By recycling D-aminoacyl-tRNA to D-amino acids and free tRNA molecules, this enzyme counteracts the toxicity associated with the formation of D-aminoacyl-tRNA entities in vivo and helps enforce protein L-homochirality. The sequence is that of D-aminoacyl-tRNA deacylase from Shewanella woodyi (strain ATCC 51908 / MS32).